A 241-amino-acid polypeptide reads, in one-letter code: Probable transcriptional regulatory protein Rmet_0785 (241 aa).

This sequence belongs to the TACO1 family.

Its subcellular location is the cytoplasm. The sequence is that of Probable transcriptional regulatory protein Rmet_0785 from Cupriavidus metallidurans (strain ATCC 43123 / DSM 2839 / NBRC 102507 / CH34) (Ralstonia metallidurans).